The following is a 66-amino-acid chain: Large ribosomal subunit protein bL35 (66 aa).

Basic residues-rich tracts occupy residues 1-16 (MPKM…RVKR) and 38-49 (TKQKRQLRKARL). The interval 1–49 (MPKMKTHRGAAKRVKRTASGQLKRSRAFTSHLFANKSTKQKRQLRKARL) is disordered.

The protein belongs to the bacterial ribosomal protein bL35 family.

This is Large ribosomal subunit protein bL35 from Staphylococcus aureus (strain MSSA476).